We begin with the raw amino-acid sequence, 658 residues long: MSNTVSLQFPDGSVREYDASMTGAALAESISKSLAKKAVAYAVDGTVRDLSDPLGASGKLEIITREDPRALELIRHDTAHVLAEAVQELFPGTQVTIGPVIENGFYYDFARNEPFTLDDLPVIEKKMREIIQRNKPFTKEVWSREKAKQVFSDKGESYKVELVDAIPAGQDLKIYYQGDWFDLCRGPHMASTGQIGNSFKLMKVAGAYWRGDANNPMLTRIYGTAFANDNDLQAYLHMLEEAEKRDHRRLGREMDLFHFQEEGPGVVFWHAKGWKMFQNLVSYMRRRLDSHGYQEVNTPQVLDKSLWETSGHWGWYRDNMFKVTVAGDDTDDDRVFALKPMNCPGHVQIFKHGLKSYRDLPIKLAEFGNVHRYEPSGALHGLMRVRGFTQDDAHIFCTEEQMAAECLHINDLILSVYKDFGFEEITIKLSTRPEKRVGSDELWDRAESVMMTVLEQIRQQSNNIKTGILPGEGAFYGPKFEYTLKDAIGREWQCGTTQVDFNLPERFGAFYIGADSEKKQPVMIHRAICGSMERFLGILIENFAGHMPLWFAPVQVVVATITSDADEYAKEAAAKLKAAGLQVVTDLRNEKINYKVREHSLQKVPVILVCGKREAEEKTVNMRRLGSRDQESMTLDEAIARLCEEATPPDLLRLKNAG.

In terms of domain architecture, TGS spans Met-1–Thr-64. The tract at residues Asp-246 to Pro-548 is catalytic. Cys-343, His-394, and His-525 together coordinate Zn(2+).

It belongs to the class-II aminoacyl-tRNA synthetase family. As to quaternary structure, homodimer. It depends on Zn(2+) as a cofactor.

Its subcellular location is the cytoplasm. The catalysed reaction is tRNA(Thr) + L-threonine + ATP = L-threonyl-tRNA(Thr) + AMP + diphosphate + H(+). Functionally, catalyzes the attachment of threonine to tRNA(Thr) in a two-step reaction: L-threonine is first activated by ATP to form Thr-AMP and then transferred to the acceptor end of tRNA(Thr). Also edits incorrectly charged L-seryl-tRNA(Thr). The protein is Threonine--tRNA ligase of Brucella abortus (strain S19).